The following is a 430-amino-acid chain: Glutamate-1-semialdehyde 2,1-aminomutase (430 aa).

Lys265 carries the N6-(pyridoxal phosphate)lysine modification.

It belongs to the class-III pyridoxal-phosphate-dependent aminotransferase family. HemL subfamily. In terms of assembly, homodimer. Pyridoxal 5'-phosphate serves as cofactor.

The protein localises to the cytoplasm. It carries out the reaction (S)-4-amino-5-oxopentanoate = 5-aminolevulinate. The protein operates within porphyrin-containing compound metabolism; protoporphyrin-IX biosynthesis; 5-aminolevulinate from L-glutamyl-tRNA(Glu): step 2/2. The protein is Glutamate-1-semialdehyde 2,1-aminomutase of Shewanella sp. (strain MR-7).